A 432-amino-acid chain; its full sequence is D-amino acid dehydrogenase (432 aa).

3–17 (VVILGSGVVGVTSAW) provides a ligand contact to FAD.

It belongs to the DadA oxidoreductase family. It depends on FAD as a cofactor.

The enzyme catalyses a D-alpha-amino acid + A + H2O = a 2-oxocarboxylate + AH2 + NH4(+). Its pathway is amino-acid degradation; D-alanine degradation; NH(3) and pyruvate from D-alanine: step 1/1. Functionally, oxidative deamination of D-amino acids. The chain is D-amino acid dehydrogenase from Salmonella agona (strain SL483).